We begin with the raw amino-acid sequence, 155 residues long: Small ribosomal subunit protein uS7 (155 aa).

It belongs to the universal ribosomal protein uS7 family. In terms of assembly, part of the 30S ribosomal subunit. Contacts proteins S9 and S11.

In terms of biological role, one of the primary rRNA binding proteins, it binds directly to 16S rRNA where it nucleates assembly of the head domain of the 30S subunit. Is located at the subunit interface close to the decoding center, probably blocks exit of the E-site tRNA. The protein is Small ribosomal subunit protein uS7 of Halorhodospira halophila (strain DSM 244 / SL1) (Ectothiorhodospira halophila (strain DSM 244 / SL1)).